The primary structure comprises 119 residues: Ribonuclease P protein component (119 aa).

It belongs to the RnpA family. In terms of assembly, consists of a catalytic RNA component (M1 or rnpB) and a protein subunit.

The enzyme catalyses Endonucleolytic cleavage of RNA, removing 5'-extranucleotides from tRNA precursor.. Functionally, RNaseP catalyzes the removal of the 5'-leader sequence from pre-tRNA to produce the mature 5'-terminus. It can also cleave other RNA substrates such as 4.5S RNA. The protein component plays an auxiliary but essential role in vivo by binding to the 5'-leader sequence and broadening the substrate specificity of the ribozyme. The sequence is that of Ribonuclease P protein component from Aeromonas hydrophila subsp. hydrophila (strain ATCC 7966 / DSM 30187 / BCRC 13018 / CCUG 14551 / JCM 1027 / KCTC 2358 / NCIMB 9240 / NCTC 8049).